The sequence spans 429 residues: Adenylosuccinate synthetase (429 aa).

GTP contacts are provided by residues 11-17 (GDEGKGK) and 39-41 (GHT). The Proton acceptor role is filled by Asp-12. The Mg(2+) site is built by Asp-12 and Gly-39. IMP contacts are provided by residues 12 to 15 (DEGK), 37 to 40 (NAGH), Thr-130, Arg-144, Asn-226, Thr-241, and Arg-305. The active-site Proton donor is the His-40. Residue 301-307 (VTTGRRR) coordinates substrate. Residues Arg-307, 333-335 (KLD), and 415-417 (GVG) contribute to the GTP site.

It belongs to the adenylosuccinate synthetase family. Homodimer. Requires Mg(2+) as cofactor.

It is found in the cytoplasm. The catalysed reaction is IMP + L-aspartate + GTP = N(6)-(1,2-dicarboxyethyl)-AMP + GDP + phosphate + 2 H(+). It participates in purine metabolism; AMP biosynthesis via de novo pathway; AMP from IMP: step 1/2. In terms of biological role, plays an important role in the de novo pathway and in the salvage pathway of purine nucleotide biosynthesis. Catalyzes the first committed step in the biosynthesis of AMP from IMP. In Yarrowia lipolytica (strain CLIB 122 / E 150) (Yeast), this protein is Adenylosuccinate synthetase.